The sequence spans 592 residues: Catabolite repression protein creC (592 aa).

The interval 119–140 is disordered; it reads NSALAAAPVKDPSKKRKPKNNI. 4 WD repeats span residues 248 to 288, 327 to 368, 369 to 408, and 411 to 455; these read INSS…ALFI, LANQ…DVFR, SYYG…IIAR, and GHDS…LHRP. 2 disordered regions span residues 459–513 and 556–592; these read HQTS…HPVE and WDRP…MGSL. Composition is skewed to polar residues over residues 484–499 and 564–576; these read SSGN…TAAD and SDNY…SETL. The WD 5 repeat unit spans residues 529 to 566; sequence VGEDPICWLGFQEDTIMTSSLEGHIRTWDRPRENISDN.

It belongs to the WD repeat creC family. As to quaternary structure, interacts with creB.

In terms of biological role, component of the regulatory network controlling carbon source utilization through ubiquitination and deubiquitination involving creA, creB, creC, creD and acrB. Required to prevent the proteolysis of the CreB deubiquitinating enzyme in the absence of carbon catabolite repression. CreB deubiquitinating enzyme stabilized in a complex with the CreC leads to the expression of genes such as those in the proline and quinate pathways. The polypeptide is Catabolite repression protein creC (creC) (Emericella nidulans (strain FGSC A4 / ATCC 38163 / CBS 112.46 / NRRL 194 / M139) (Aspergillus nidulans)).